A 186-amino-acid chain; its full sequence is Adenine phosphoribosyltransferase (186 aa).

The protein belongs to the purine/pyrimidine phosphoribosyltransferase family. As to quaternary structure, homodimer.

It is found in the cytoplasm. The catalysed reaction is AMP + diphosphate = 5-phospho-alpha-D-ribose 1-diphosphate + adenine. The protein operates within purine metabolism; AMP biosynthesis via salvage pathway; AMP from adenine: step 1/1. In terms of biological role, catalyzes a salvage reaction resulting in the formation of AMP, that is energically less costly than de novo synthesis. The sequence is that of Adenine phosphoribosyltransferase from Xanthomonas axonopodis pv. citri (strain 306).